A 422-amino-acid polypeptide reads, in one-letter code: COUP transcription factor 1 (422 aa).

The interval 1 to 80 (MAMVVSSWRD…QGPPGSGQSQ (80 aa)) is disordered. Positions 39 to 66 (EQQQAGSGAPHTPQTPGQPGAPATPGTQ) are enriched in low complexity. Residues 82 to 157 (HIECVVCGDK…VGMRREAVQR (76 aa)) constitute a DNA-binding region (nuclear receptor). NR C4-type zinc fingers lie at residues 85–105 (CVVC…CEGC) and 121–145 (CRAN…LKKC). The region spanning 183 to 409 (YLSGYISLLL…TLIRDMLLSG (227 aa)) is the NR LBD domain. Residues 343 to 422 (LQEKSQCALE…NWPYMSIQCS (80 aa)) are important for dimerization.

It belongs to the nuclear hormone receptor family. NR2 subfamily. Binds DNA as dimer; homodimer and probable heterodimer with NR2F6. Interacts with GTF2B; this interaction is direct. Interacts with COPS2.

Its subcellular location is the nucleus. Coup (chicken ovalbumin upstream promoter) transcription factor binds to the ovalbumin promoter and, in conjunction with another protein (S300-II) stimulates initiation of transcription. Binds to both direct repeats and palindromes of the 5'-AGGTCA-3' motif. Represses transcriptional activity of LHCG. The protein is COUP transcription factor 1 (Nr2f1) of Mus musculus (Mouse).